The primary structure comprises 296 residues: Uracil phosphoribosyltransferase, chloroplastic (296 aa).

The N-terminal 61 residues, 1–61, are a transit peptide targeting the chloroplast; that stretch reads MACSIGNAFR…SSSLSRRTIR (61 aa). Alanine 2 is subject to N-acetylalanine. 148–151 contacts GTP; it reads REPI. Residues arginine 158, arginine 183, aspartate 211, 216–219, and aspartate 282 contribute to the 5-phospho-alpha-D-ribose 1-diphosphate site; that span reads TGGT. Position 281-283 (281-283) interacts with uracil; sequence GDA.

Belongs to the UPRTase family. It depends on Mg(2+) as a cofactor.

The protein resides in the plastid. It localises to the chloroplast. The enzyme catalyses UMP + diphosphate = 5-phospho-alpha-D-ribose 1-diphosphate + uracil. Its pathway is pyrimidine metabolism; UMP biosynthesis via salvage pathway; UMP from uracil: step 1/1. Allosterically activated by GTP. In terms of biological role, uracil phosphoribosyltransferase (UPRT) that catalyzes the conversion of uracil and 5-phospho-alpha-D-ribose 1-diphosphate (PRPP) to UMP and diphosphate. Is probably the only functional UPRT, since the dual-domain proteins of the UKL family seem to lack this activity. In Arabidopsis thaliana (Mouse-ear cress), this protein is Uracil phosphoribosyltransferase, chloroplastic (UPP).